The primary structure comprises 225 residues: Flagellar transcriptional regulator FlhC (225 aa).

4 residues coordinate Zn(2+): cysteine 149, cysteine 152, cysteine 169, and cysteine 172.

Belongs to the FlhC family. In terms of assembly, heterohexamer composed of two FlhC and four FlhD subunits. Each FlhC binds a FlhD dimer, forming a heterotrimer, and a hexamer assembles by dimerization of two heterotrimers. The cofactor is Zn(2+).

It is found in the cytoplasm. Functionally, functions in complex with FlhD as a master transcriptional regulator that regulates transcription of several flagellar and non-flagellar operons by binding to their promoter region. Activates expression of class 2 flagellar genes, including fliA, which is a flagellum-specific sigma factor that turns on the class 3 genes. Also regulates genes whose products function in a variety of physiological pathways. This Burkholderia lata (strain ATCC 17760 / DSM 23089 / LMG 22485 / NCIMB 9086 / R18194 / 383) protein is Flagellar transcriptional regulator FlhC.